A 227-amino-acid chain; its full sequence is 2-phospho-L-lactate guanylyltransferase (227 aa).

This sequence belongs to the CofC family. Homodimer.

It carries out the reaction (2S)-2-phospholactate + GTP + H(+) = (2S)-lactyl-2-diphospho-5'-guanosine + diphosphate. The protein operates within cofactor biosynthesis; coenzyme F420 biosynthesis. Guanylyltransferase that catalyzes the activation of (2S)-2-phospholactate (2-PL) as (2S)-lactyl-2-diphospho-5'-guanosine, via the condensation of 2-PL with GTP. It is involved in the biosynthesis of coenzyme F420, a hydride carrier cofactor. This chain is 2-phospho-L-lactate guanylyltransferase, found in Methanocaldococcus sp. (strain FS406-22).